We begin with the raw amino-acid sequence, 209 residues long: Protein GrpE (209 aa).

Residues 1–13 (MSNDSSKAKQNQV) are compositionally biased toward polar residues. Residues 1–33 (MSNDSSKAKQNQVDEAVEGEILTESEVETGNDE) are disordered. Over residues 15–31 (EAVEGEILTESEVETGN) the composition is skewed to acidic residues.

It belongs to the GrpE family. Homodimer.

The protein resides in the cytoplasm. Participates actively in the response to hyperosmotic and heat shock by preventing the aggregation of stress-denatured proteins, in association with DnaK and GrpE. It is the nucleotide exchange factor for DnaK and may function as a thermosensor. Unfolded proteins bind initially to DnaJ; upon interaction with the DnaJ-bound protein, DnaK hydrolyzes its bound ATP, resulting in the formation of a stable complex. GrpE releases ADP from DnaK; ATP binding to DnaK triggers the release of the substrate protein, thus completing the reaction cycle. Several rounds of ATP-dependent interactions between DnaJ, DnaK and GrpE are required for fully efficient folding. The sequence is that of Protein GrpE from Shewanella woodyi (strain ATCC 51908 / MS32).